A 428-amino-acid chain; its full sequence is D-amino acid dehydrogenase (428 aa).

3 to 17 (VVVLGSGVVGVTSAY) contributes to the FAD binding site.

The protein belongs to the DadA oxidoreductase family. Requires FAD as cofactor.

The enzyme catalyses a D-alpha-amino acid + A + H2O = a 2-oxocarboxylate + AH2 + NH4(+). It participates in amino-acid degradation; D-alanine degradation; NH(3) and pyruvate from D-alanine: step 1/1. In terms of biological role, oxidative deamination of D-amino acids. This chain is D-amino acid dehydrogenase, found in Paraburkholderia phymatum (strain DSM 17167 / CIP 108236 / LMG 21445 / STM815) (Burkholderia phymatum).